The chain runs to 294 residues: Glycine--tRNA ligase alpha subunit (294 aa).

It belongs to the class-II aminoacyl-tRNA synthetase family. As to quaternary structure, tetramer of two alpha and two beta subunits.

Its subcellular location is the cytoplasm. The catalysed reaction is tRNA(Gly) + glycine + ATP = glycyl-tRNA(Gly) + AMP + diphosphate. The sequence is that of Glycine--tRNA ligase alpha subunit from Natranaerobius thermophilus (strain ATCC BAA-1301 / DSM 18059 / JW/NM-WN-LF).